We begin with the raw amino-acid sequence, 148 residues long: Lysozyme C-3 (148 aa).

An N-terminal signal peptide occupies residues 1–18 (MKTLLVLALLLLSVSVQA). Residues 19–148 (KVYDRCEFAR…VSQYIRGCKL (130 aa)) form the C-type lysozyme domain. 4 disulfide bridges follow: Cys-24–Cys-146, Cys-48–Cys-134, Cys-83–Cys-99, and Cys-95–Cys-113. Catalysis depends on residues Glu-53 and Asp-71.

It belongs to the glycosyl hydrolase 22 family. As to quaternary structure, monomer.

It localises to the secreted. The catalysed reaction is Hydrolysis of (1-&gt;4)-beta-linkages between N-acetylmuramic acid and N-acetyl-D-glucosamine residues in a peptidoglycan and between N-acetyl-D-glucosamine residues in chitodextrins.. Lysozymes have primarily a bacteriolytic function; those in tissues and body fluids are associated with the monocyte-macrophage system and enhance the activity of immunoagents. The sequence is that of Lysozyme C-3 from Sus scrofa (Pig).